Reading from the N-terminus, the 173-residue chain is Photosystem I assembly protein Ycf3 (173 aa).

TPR repeat units lie at residues 35–68 (AYIY…EENK), 72–105 (GETL…NPKQ), and 120–153 (GRYA…YPGG).

Belongs to the Ycf3 family.

The protein resides in the cellular thylakoid membrane. Its function is as follows. Essential for the assembly of the photosystem I (PSI) complex. May act as a chaperone-like factor to guide the assembly of the PSI subunits. This Prochlorococcus marinus (strain MIT 9215) protein is Photosystem I assembly protein Ycf3.